We begin with the raw amino-acid sequence, 599 residues long: Elongation factor 4 (599 aa).

The region spanning 2 to 184 is the tr-type G domain; that stretch reads KNIRNFSIIA…RLVRDIPPPE (183 aa). Residues 14–19 and 131–134 contribute to the GTP site; these read DHGKST and NKID.

The protein belongs to the TRAFAC class translation factor GTPase superfamily. Classic translation factor GTPase family. LepA subfamily.

Its subcellular location is the cell inner membrane. It carries out the reaction GTP + H2O = GDP + phosphate + H(+). Its function is as follows. Required for accurate and efficient protein synthesis under certain stress conditions. May act as a fidelity factor of the translation reaction, by catalyzing a one-codon backward translocation of tRNAs on improperly translocated ribosomes. Back-translocation proceeds from a post-translocation (POST) complex to a pre-translocation (PRE) complex, thus giving elongation factor G a second chance to translocate the tRNAs correctly. Binds to ribosomes in a GTP-dependent manner. This chain is Elongation factor 4, found in Shigella sonnei (strain Ss046).